Consider the following 298-residue polypeptide: Ribosomal RNA small subunit methyltransferase H (298 aa).

Residues 37 to 39 (GGH), aspartate 57, leucine 91, aspartate 105, and glutamine 112 each bind S-adenosyl-L-methionine.

The protein belongs to the methyltransferase superfamily. RsmH family.

The protein resides in the cytoplasm. It catalyses the reaction cytidine(1402) in 16S rRNA + S-adenosyl-L-methionine = N(4)-methylcytidine(1402) in 16S rRNA + S-adenosyl-L-homocysteine + H(+). In terms of biological role, specifically methylates the N4 position of cytidine in position 1402 (C1402) of 16S rRNA. This is Ribosomal RNA small subunit methyltransferase H from Kosmotoga olearia (strain ATCC BAA-1733 / DSM 21960 / TBF 19.5.1).